The primary structure comprises 334 residues: Cell division protein ZipA (334 aa).

Residues 1 to 2 (ME) are Periplasmic-facing. Residues 3–23 (LHIIFLILGGLLIVLLAGFSI) form a helical membrane-spanning segment. Residues 24–334 (YSARREKSRI…DRQAYFARVS (311 aa)) are Cytoplasmic-facing.

Belongs to the ZipA family. As to quaternary structure, interacts with FtsZ via their C-terminal domains.

It localises to the cell inner membrane. Functionally, essential cell division protein that stabilizes the FtsZ protofilaments by cross-linking them and that serves as a cytoplasmic membrane anchor for the Z ring. Also required for the recruitment to the septal ring of downstream cell division proteins. The chain is Cell division protein ZipA from Haemophilus ducreyi (strain 35000HP / ATCC 700724).